We begin with the raw amino-acid sequence, 301 residues long: UDP-N-acetylenolpyruvoylglucosamine reductase (301 aa).

The FAD-binding PCMH-type domain maps to 30–194 (VGGEADYLVF…LSVKFALAPG (165 aa)). Residue Arg-173 is part of the active site. Ser-223 functions as the Proton donor in the catalytic mechanism. Glu-293 is a catalytic residue.

This sequence belongs to the MurB family. The cofactor is FAD.

It is found in the cytoplasm. The enzyme catalyses UDP-N-acetyl-alpha-D-muramate + NADP(+) = UDP-N-acetyl-3-O-(1-carboxyvinyl)-alpha-D-glucosamine + NADPH + H(+). Its pathway is cell wall biogenesis; peptidoglycan biosynthesis. In terms of biological role, cell wall formation. This chain is UDP-N-acetylenolpyruvoylglucosamine reductase, found in Streptococcus pneumoniae (strain 70585).